Here is a 59-residue protein sequence, read N- to C-terminus: Large ribosomal subunit protein uL30 (59 aa).

The protein belongs to the universal ribosomal protein uL30 family. In terms of assembly, part of the 50S ribosomal subunit.

The chain is Large ribosomal subunit protein uL30 from Photorhabdus laumondii subsp. laumondii (strain DSM 15139 / CIP 105565 / TT01) (Photorhabdus luminescens subsp. laumondii).